A 332-amino-acid polypeptide reads, in one-letter code: Protoheme IX farnesyltransferase (332 aa).

7 helical membrane passes run 63–83 (LICT…LNCL), 109–129 (TVFL…ISGV), 132–152 (LAAG…TIIL), 160–180 (IVFG…AATG), 188–208 (WLFG…AILL), 245–265 (ILGV…LLPF), and 286–306 (AKGL…LLLI).

It belongs to the UbiA prenyltransferase family. Protoheme IX farnesyltransferase subfamily.

It localises to the cell inner membrane. It carries out the reaction heme b + (2E,6E)-farnesyl diphosphate + H2O = Fe(II)-heme o + diphosphate. It functions in the pathway porphyrin-containing compound metabolism; heme O biosynthesis; heme O from protoheme: step 1/1. Functionally, converts heme B (protoheme IX) to heme O by substitution of the vinyl group on carbon 2 of heme B porphyrin ring with a hydroxyethyl farnesyl side group. The chain is Protoheme IX farnesyltransferase from Prochlorococcus marinus (strain MIT 9515).